A 130-amino-acid chain; its full sequence is MADVRYYGTGRRKHAAARVFLVAGDGKVTVNGRDISEYFGYETLIMTAKEPLVLTETEGKYDIMVTVKGGGFTGQAGAIRHGISRALLQADPDFRGTLKAKGFLTRDARMKERKKYGLKAARRAPQFSKR.

This sequence belongs to the universal ribosomal protein uS9 family.

The protein is Small ribosomal subunit protein uS9 of Exiguobacterium sibiricum (strain DSM 17290 / CCUG 55495 / CIP 109462 / JCM 13490 / 255-15).